Here is a 690-residue protein sequence, read N- to C-terminus: MIIKQDKLSTFYPLVSIIIPVYNGANYMREAIDSALAQTYKNIEVIVVNDGSKDSGETEAIALSYGDKIRYFHKENGGCGSALNYGIKNMKGKYFSWLSHDDLYYPNKVEHQINILNKLNNKNTIIYGGYELVDKNGKFLYHIRPDSVLTTDKLNISLLPLLRGLIHGCSLLIPVKYFHEVDMFDETLPSTQDYDLWFKIFRVASIYFDKLILIKSRFHSEQGSKKISAHNEECNALWSSFLQKLTEEEMIKMEGSAYLFLTRTANFLSSTPYQEAYALANNMAKQILRDAKVSVIIPVYNRINWTIQSIESVLNQTHENFEVIVINDGSTEDISELIKFCKKDKRIQYFHKKNEGPASARNLGIKKSSGKYIAFLDSDDLFFHNKLELQLKFMEENNFIFSHTSYQRIDEEGKYLESINSGSFSGNVFPKIIQTCPIAMPTVMGTLALFQENLFPENIRSGEDCCLWISISSRNLLGGISKELSKVRIRGDNTTFMNPNKYSQGLINITSYVLNNAYLAKFAPFTINLLLTAVTQLKILESKNELELLKNEDESELLENEDKSESLENEDKSESLENEDKSESLENEDKSESLENEKKEKNVEKNNNYFTQYNYPIIKQKVRKYYVKKLLENKKKEENNYFISYLKIKLKSYYFIAKILILLTIASLKEDGVRATISKIKRWFKKHRRF.

The disordered stretch occupies residues 553–601 (DESELLENEDKSESLENEDKSESLENEDKSESLENEDKSESLENEKKEK). The segment covering 560–601 (NEDKSESLENEDKSESLENEDKSESLENEDKSESLENEKKEK) has biased composition (basic and acidic residues).

Belongs to the glycosyltransferase 2 family.

This is an uncharacterized protein from Rickettsia bellii (strain RML369-C).